The sequence spans 292 residues: uncharacterized protein (292 aa).

5 consecutive transmembrane segments (helical) span residues 57 to 77, 101 to 121, 143 to 163, 184 to 204, and 271 to 291; these read IISL…LTLI, VYVF…FNFM, LIYA…AVLI, VVIT…NFVL, and IAFL…DRGI.

It belongs to the CbiQ family.

It localises to the cell membrane. This is an uncharacterized protein from Methanocaldococcus jannaschii (strain ATCC 43067 / DSM 2661 / JAL-1 / JCM 10045 / NBRC 100440) (Methanococcus jannaschii).